The sequence spans 397 residues: 2,3-bisphosphoglycerate-independent phosphoglycerate mutase (397 aa).

It belongs to the BPG-independent phosphoglycerate mutase family. A-PGAM subfamily.

It carries out the reaction (2R)-2-phosphoglycerate = (2R)-3-phosphoglycerate. It functions in the pathway carbohydrate degradation; glycolysis; pyruvate from D-glyceraldehyde 3-phosphate: step 3/5. Functionally, catalyzes the interconversion of 2-phosphoglycerate and 3-phosphoglycerate. This chain is 2,3-bisphosphoglycerate-independent phosphoglycerate mutase, found in Methanosarcina acetivorans (strain ATCC 35395 / DSM 2834 / JCM 12185 / C2A).